The primary structure comprises 527 residues: Probable protein kinase UbiB (527 aa).

Residues 23 to 43 (ELLLELPLPFWLRALSWLLPW) form a helical membrane-spanning segment. One can recognise a Protein kinase domain in the interval 125-488 (RFDSQPLASA…ESDARDQWPL (364 aa)). Residues 131–139 (LASASVAQV) and lysine 153 each bind ATP. Aspartate 288 acts as the Proton acceptor in catalysis. The helical transmembrane segment at 504-524 (LAPLLATWPAWLMVGGGLYLV) threads the bilayer.

This sequence belongs to the ABC1 family. UbiB subfamily.

The protein localises to the cell inner membrane. It functions in the pathway cofactor biosynthesis; ubiquinone biosynthesis [regulation]. Is probably a protein kinase regulator of UbiI activity which is involved in aerobic coenzyme Q (ubiquinone) biosynthesis. The chain is Probable protein kinase UbiB from Ectopseudomonas mendocina (strain ymp) (Pseudomonas mendocina).